Consider the following 403-residue polypeptide: Metacaspase-1A (403 aa).

The segment at 1 to 93 (MQHHHHSSYG…PPTDPVAFGH (93 aa)) is disordered. The span at 18-31 (GQAYRQQQPYYGQP) shows a compositional bias: low complexity. Pro residues predominate over residues 32-55 (SPQPYAQPPPPNYQRPSGYGPPPS). Active-site residues include H194 and C250.

The protein belongs to the peptidase C14B family.

Involved in cell death (apoptosis). In Aspergillus terreus (strain NIH 2624 / FGSC A1156), this protein is Metacaspase-1A (casA).